Here is a 901-residue protein sequence, read N- to C-terminus: HTH-type transcriptional regulator MalT (901 aa).

Position 39–46 (39–46 (SPAGYGKT)) interacts with ATP. In terms of domain architecture, HTH luxR-type spans 829–894 (ELIRTSPLTQ…DAVQHAQQLL (66 aa)). Residues 853-872 (NEQIAGELAVAATTIKTHIR) constitute a DNA-binding region (H-T-H motif).

Belongs to the MalT family. Monomer in solution. Oligomerizes to an active state in the presence of the positive effectors ATP and maltotriose.

Activated by ATP and maltotriose, which are both required for DNA binding. In terms of biological role, positively regulates the transcription of the maltose regulon whose gene products are responsible for uptake and catabolism of malto-oligosaccharides. Specifically binds to the promoter region of its target genes, recognizing a short DNA motif called the MalT box. This Salmonella agona (strain SL483) protein is HTH-type transcriptional regulator MalT.